The following is a 133-amino-acid chain: Nucleoside diphosphate kinase (133 aa).

ATP contacts are provided by Lys9, Phe57, Arg85, Thr91, Arg102, and Asn112. His115 (pros-phosphohistidine intermediate) is an active-site residue.

It belongs to the NDK family. As to quaternary structure, homotetramer. Requires Mg(2+) as cofactor.

The protein localises to the cytoplasm. The catalysed reaction is a 2'-deoxyribonucleoside 5'-diphosphate + ATP = a 2'-deoxyribonucleoside 5'-triphosphate + ADP. It carries out the reaction a ribonucleoside 5'-diphosphate + ATP = a ribonucleoside 5'-triphosphate + ADP. Major role in the synthesis of nucleoside triphosphates other than ATP. The ATP gamma phosphate is transferred to the NDP beta phosphate via a ping-pong mechanism, using a phosphorylated active-site intermediate. This chain is Nucleoside diphosphate kinase, found in Rubrobacter xylanophilus (strain DSM 9941 / JCM 11954 / NBRC 16129 / PRD-1).